A 368-amino-acid polypeptide reads, in one-letter code: 3-dehydroquinate synthase (368 aa).

Residues 110-114 (GVIGD), 134-135 (TS), Lys147, and Lys156 each bind NAD(+). Zn(2+)-binding residues include Glu189, His254, and His271.

It belongs to the sugar phosphate cyclases superfamily. Dehydroquinate synthase family. NAD(+) is required as a cofactor. The cofactor is Co(2+). Requires Zn(2+) as cofactor.

The protein localises to the cytoplasm. The enzyme catalyses 7-phospho-2-dehydro-3-deoxy-D-arabino-heptonate = 3-dehydroquinate + phosphate. The protein operates within metabolic intermediate biosynthesis; chorismate biosynthesis; chorismate from D-erythrose 4-phosphate and phosphoenolpyruvate: step 2/7. In terms of biological role, catalyzes the conversion of 3-deoxy-D-arabino-heptulosonate 7-phosphate (DAHP) to dehydroquinate (DHQ). This Thermosynechococcus vestitus (strain NIES-2133 / IAM M-273 / BP-1) protein is 3-dehydroquinate synthase.